Here is a 198-residue protein sequence, read N- to C-terminus: V-type proton ATPase subunit E (198 aa).

The protein belongs to the V-ATPase E subunit family.

In terms of biological role, produces ATP from ADP in the presence of a proton gradient across the membrane. The polypeptide is V-type proton ATPase subunit E (Borrelia turicatae (strain 91E135)).